The primary structure comprises 743 residues: Neutral ceramidase (743 aa).

Over 1 to 14 (MASKSRRLSGLEIS) the chain is Cytoplasmic. A helical; Signal-anchor for type II membrane protein membrane pass occupies residues 15–35 (LIVLFLLMTAVSVALITVLAL). The Lumenal segment spans residues 36 to 743 (KQESDKKEEV…FKVARSFYYF (708 aa)). The disordered stretch occupies residues 40–60 (DKKEEVTPEEPSPSVTPPEKP). Residues 49-59 (EPSPSVTPPEK) show a composition bias toward pro residues. The Zn(2+) site is built by His-151 and His-260. Asn-265 is a glycosylation site (N-linked (GlcNAc...) asparagine). The active-site Nucleophile is Ser-312. Intrachain disulfides connect Cys-320–Cys-334 and Cys-327–Cys-342. N-linked (GlcNAc...) asparagine glycosylation is found at Asn-331, Asn-389, Asn-398, and Asn-451. Cys-406 and Cys-456 form a disulfide bridge. The Zn(2+) site is built by Glu-498 and Tyr-538. Asn-661 carries an N-linked (GlcNAc...) asparagine glycan. Ca(2+) is bound by residues Asp-672, Ser-674, and Thr-677. A glycan (N-linked (GlcNAc...) asparagine) is linked at Asn-720.

Belongs to the neutral ceramidase family. It depends on Zn(2+) as a cofactor. N-glycosylated. In terms of processing, O-glycosylated. Detected in intestine (at protein level).

The protein localises to the cell membrane. It localises to the membrane raft. Its subcellular location is the membrane. The protein resides in the caveola. It is found in the golgi apparatus membrane. The protein localises to the mitochondrion. It localises to the secreted. Its subcellular location is the extracellular exosome. It carries out the reaction an N-acylsphing-4-enine + H2O = sphing-4-enine + a fatty acid. It catalyses the reaction N-dodecanoylsphing-4-enine + H2O = dodecanoate + sphing-4-enine. It participates in lipid metabolism; sphingolipid metabolism. Plasma membrane ceramidase that hydrolyzes sphingolipid ceramides into sphingosine and free fatty acids at neutral pH. Ceramides, sphingosine, and its phosphorylated form sphingosine-1-phosphate are bioactive lipids that mediate cellular signaling pathways regulating several biological processes including cell proliferation, apoptosis and differentiation. Also catalyzes the reverse reaction allowing the synthesis of ceramides from fatty acids and sphingosine. Together with sphingomyelinase, participates in the production of sphingosine and sphingosine-1-phosphate from the degradation of sphingomyelin, a sphingolipid enriched in the plasma membrane of cells. Also participates in the hydrolysis of ceramides from the extracellular milieu allowing the production of sphingosine-1-phosphate inside and outside cells. The chain is Neutral ceramidase (asah2) from Danio rerio (Zebrafish).